The chain runs to 257 residues: MSVRATARLRAEPDGRDGTALPVLAGEGPLALRRTRSPQAAYARVTVVGAMSAPLNGDRLAVEAEVTDGAHLTVDAAAATVALPGPRPDADPSTYGVDLTVGEGAVLHWLPEQLVSAHGSDLRMTTRVRLAPTARLLLREEQILGRHGEPTGALTTRLTVHHAGRPLLDQQLAYGPGAPGGWDGPAVLAGHRAVGQLLLADPSFGDAPLPARLLGPTAALTPLAGPAVLVTAVAADARLLRGMLDEAMRELLDTLKA.

Positions 1–22 (MSVRATARLRAEPDGRDGTALP) are disordered.

The protein belongs to the UreD family. As to quaternary structure, ureD, UreF and UreG form a complex that acts as a GTP-hydrolysis-dependent molecular chaperone, activating the urease apoprotein by helping to assemble the nickel containing metallocenter of UreC. The UreE protein probably delivers the nickel.

The protein resides in the cytoplasm. Required for maturation of urease via the functional incorporation of the urease nickel metallocenter. This chain is Urease accessory protein UreD 3, found in Streptomyces griseus subsp. griseus (strain JCM 4626 / CBS 651.72 / NBRC 13350 / KCC S-0626 / ISP 5235).